Reading from the N-terminus, the 210-residue chain is Transcriptional regulator MxiE (210 aa).

The HTH araC/xylS-type domain occupies 99-199 (YHLVLYLLRT…GFSARELSNI (101 aa)). DNA-binding regions (H-T-H motif) lie at residues 118-139 (KSLT…RKAL) and 166-189 (ITSA…KTRL).

Functionally, necessary for the secretion of ipa invasins. Probable transcriptional regulatory protein. In Shigella flexneri, this protein is Transcriptional regulator MxiE (mxiE).